Here is a 207-residue protein sequence, read N- to C-terminus: Transcriptional regulator YqjI (207 aa).

Over residues 1–40 (MSHHHEGCCKHEGQPRHEGCCKGEKSEHEHCGHGHQHEHG) the composition is skewed to basic and acidic residues. The tract at residues 1-46 (MSHHHEGCCKHEGQPRHEGCCKGEKSEHEHCGHGHQHEHGQCCGGR) is disordered.

Oligomer (probable predominant form) and monomer.

Its activity is regulated as follows. Divalent metals such as nickel and iron have a similar negative effect on YqjI DNA-binding activity. Functionally, represses the expression of YqjH which is involved in iron homeostasis under excess nickel conditions. Also represses its own expression. This Escherichia coli (strain K12) protein is Transcriptional regulator YqjI (yqjI).